A 355-amino-acid chain; its full sequence is UDP-3-O-acylglucosamine N-acyltransferase (355 aa).

His252 acts as the Proton acceptor in catalysis.

Belongs to the transferase hexapeptide repeat family. LpxD subfamily. As to quaternary structure, homotrimer.

It carries out the reaction a UDP-3-O-[(3R)-3-hydroxyacyl]-alpha-D-glucosamine + a (3R)-hydroxyacyl-[ACP] = a UDP-2-N,3-O-bis[(3R)-3-hydroxyacyl]-alpha-D-glucosamine + holo-[ACP] + H(+). It functions in the pathway bacterial outer membrane biogenesis; LPS lipid A biosynthesis. Catalyzes the N-acylation of UDP-3-O-acylglucosamine using 3-hydroxyacyl-ACP as the acyl donor. Is involved in the biosynthesis of lipid A, a phosphorylated glycolipid that anchors the lipopolysaccharide to the outer membrane of the cell. The polypeptide is UDP-3-O-acylglucosamine N-acyltransferase (Polynucleobacter necessarius subsp. necessarius (strain STIR1)).